The following is a 228-amino-acid chain: UPF0173 metal-dependent hydrolase lwe1590 (228 aa).

It belongs to the UPF0173 family.

The polypeptide is UPF0173 metal-dependent hydrolase lwe1590 (Listeria welshimeri serovar 6b (strain ATCC 35897 / DSM 20650 / CCUG 15529 / CIP 8149 / NCTC 11857 / SLCC 5334 / V8)).